Reading from the N-terminus, the 364-residue chain is Histidinol-phosphate aminotransferase (364 aa).

Residues 1–46 (MQPRDLSDHSPYVPGRGVEEVARDRGLDPDDLIKLSSNENPHGPSP) form a disordered region. Residues 17-33 (GVEEVARDRGLDPDDLI) show a composition bias toward basic and acidic residues. Lys-222 is subject to N6-(pyridoxal phosphate)lysine.

Belongs to the class-II pyridoxal-phosphate-dependent aminotransferase family. Histidinol-phosphate aminotransferase subfamily. Pyridoxal 5'-phosphate is required as a cofactor.

It carries out the reaction L-histidinol phosphate + 2-oxoglutarate = 3-(imidazol-4-yl)-2-oxopropyl phosphate + L-glutamate. It functions in the pathway amino-acid biosynthesis; L-histidine biosynthesis; L-histidine from 5-phospho-alpha-D-ribose 1-diphosphate: step 7/9. The polypeptide is Histidinol-phosphate aminotransferase (Halorubrum lacusprofundi (strain ATCC 49239 / DSM 5036 / JCM 8891 / ACAM 34)).